The following is a 61-amino-acid chain: Small ribosomal subunit protein uS14 (61 aa).

Zn(2+) contacts are provided by Cys-24, Cys-27, Cys-40, and Cys-43.

The protein belongs to the universal ribosomal protein uS14 family. Zinc-binding uS14 subfamily. In terms of assembly, part of the 30S ribosomal subunit. Contacts proteins S3 and S10. It depends on Zn(2+) as a cofactor.

Binds 16S rRNA, required for the assembly of 30S particles and may also be responsible for determining the conformation of the 16S rRNA at the A site. In Clostridium botulinum (strain Alaska E43 / Type E3), this protein is Small ribosomal subunit protein uS14.